The sequence spans 137 residues: Acidic phospholipase A2 beta-bungarotoxin A6 chain (137 aa).

The first 9 residues, 1 to 9 (AVCVSLLGA), serve as a signal peptide directing secretion. Positions 10–17 (ANIPPQHL) are excised as a propeptide. Cystine bridges form between cysteine 44-cysteine 136, cysteine 46-cysteine 62, cysteine 61-cysteine 117, cysteine 68-cysteine 110, cysteine 78-cysteine 103, and cysteine 96-cysteine 108. Ca(2+)-binding residues include tyrosine 45, glycine 47, and glycine 49. The active site involves histidine 65. Aspartate 66 contacts Ca(2+). The active site involves aspartate 111.

The protein belongs to the phospholipase A2 family. Group I subfamily. D49 sub-subfamily. Heterodimer; disulfide-linked. The A chains have phospholipase A2 activity and the B chains show homology with the basic protease inhibitors. The cofactor is Ca(2+). In terms of tissue distribution, expressed by the venom gland.

It localises to the secreted. The catalysed reaction is a 1,2-diacyl-sn-glycero-3-phosphocholine + H2O = a 1-acyl-sn-glycero-3-phosphocholine + a fatty acid + H(+). Its function is as follows. Snake venom phospholipase A2 (PLA2) that inhibits neuromuscular transmission by blocking acetylcholine release from the nerve termini. PLA2 catalyzes the calcium-dependent hydrolysis of the 2-acyl groups in 3-sn-phosphoglycerides. In Bungarus multicinctus (Many-banded krait), this protein is Acidic phospholipase A2 beta-bungarotoxin A6 chain.